The primary structure comprises 190 residues: Dynactin subunit 6 (190 aa).

At Thr-186 the chain carries Phosphothreonine.

It belongs to the dynactin subunits 5/6 family. Dynactin subunit 6 subfamily. As to quaternary structure, subunit of dynactin, a multiprotein complex part of a tripartite complex with dynein and a adapter, such as BICDL1, BICD2 or HOOK3. The dynactin complex is built around ACTR1A/ACTB filament and consists of an actin-related filament composed of a shoulder domain, a pointed end and a barbed end. Its length is defined by its flexible shoulder domain. The soulder is composed of 2 DCTN1 subunits, 4 DCTN2 and 2 DCTN3. The 4 DCNT2 (via N-terminus) bind the ACTR1A filament and act as molecular rulers to determine the length. The pointed end is important for binding dynein-dynactin cargo adapters. Consists of 4 subunits: ACTR10, DCNT4, DCTN5 and DCTN6. Within the complex DCTN6 forms a heterodimer with DCTN5. The barbed end is composed of a CAPZA1:CAPZB heterodimers, which binds ACTR1A/ACTB filament and dynactin and stabilizes dynactin. Interacts with PLK1. Interacts with N4BP2L1. In terms of processing, phosphorylation at Thr-186 by CDK1 during mitotic prometaphase creates a binding site for PLK1 that facilitates its recruitment to kinetochores.

Its subcellular location is the cytoplasm. It is found in the cytoskeleton. The protein resides in the chromosome. The protein localises to the centromere. It localises to the kinetochore. In terms of biological role, part of the dynactin complex that activates the molecular motor dynein for ultra-processive transport along microtubules. This chain is Dynactin subunit 6 (DCTN6), found in Sus scrofa (Pig).